The following is an 876-amino-acid chain: Phosphoenolpyruvate carboxylase (876 aa).

Residues His-138 and Lys-543 contribute to the active site.

This sequence belongs to the PEPCase type 1 family. The cofactor is Mg(2+).

The enzyme catalyses oxaloacetate + phosphate = phosphoenolpyruvate + hydrogencarbonate. Its function is as follows. Forms oxaloacetate, a four-carbon dicarboxylic acid source for the tricarboxylic acid cycle. The sequence is that of Phosphoenolpyruvate carboxylase from Pseudomonas fluorescens (strain ATCC BAA-477 / NRRL B-23932 / Pf-5).